Reading from the N-terminus, the 253-residue chain is 5'-nucleotidase SurE (253 aa).

A divalent metal cation-binding residues include Asp8, Asp9, Ser39, and Asn96.

The protein belongs to the SurE nucleotidase family. A divalent metal cation serves as cofactor.

The protein localises to the cytoplasm. It carries out the reaction a ribonucleoside 5'-phosphate + H2O = a ribonucleoside + phosphate. Nucleotidase that shows phosphatase activity on nucleoside 5'-monophosphates. The polypeptide is 5'-nucleotidase SurE (Rhodopirellula baltica (strain DSM 10527 / NCIMB 13988 / SH1)).